Reading from the N-terminus, the 425-residue chain is Tyrosine--tRNA ligase (425 aa).

Tyr34 lines the L-tyrosine pocket. Residues 39-48 carry the 'HIGH' region motif; sequence PTADSLHVGN. L-tyrosine is bound by residues Tyr171 and Gln175. A 'KMSKS' region motif is present at residues 231–235; the sequence is KYGKS. Lys234 is an ATP binding site. An S4 RNA-binding domain is found at 358–424; that stretch reads APLVELLVHA…GKRTYTVVKI (67 aa).

The protein belongs to the class-I aminoacyl-tRNA synthetase family. TyrS type 1 subfamily. As to quaternary structure, homodimer.

The protein localises to the cytoplasm. It catalyses the reaction tRNA(Tyr) + L-tyrosine + ATP = L-tyrosyl-tRNA(Tyr) + AMP + diphosphate + H(+). Its function is as follows. Catalyzes the attachment of tyrosine to tRNA(Tyr) in a two-step reaction: tyrosine is first activated by ATP to form Tyr-AMP and then transferred to the acceptor end of tRNA(Tyr). This Opitutus terrae (strain DSM 11246 / JCM 15787 / PB90-1) protein is Tyrosine--tRNA ligase.